The following is a 436-amino-acid chain: Adenylosuccinate synthetase (436 aa).

Residues 22–28 (GDEGKGK) and 50–52 (GHE) contribute to the GTP site. Catalysis depends on Asp-23, which acts as the Proton acceptor. 2 residues coordinate Mg(2+): Asp-23 and Gly-50. Residues 23 to 26 (DEGK), 48 to 51 (NAGH), Thr-141, Arg-155, Asn-231, Thr-246, and Arg-310 each bind IMP. His-51 (proton donor) is an active-site residue. 306-312 (VSTARVR) lines the substrate pocket. GTP is bound by residues Arg-312, 338–340 (KMD), and 424–426 (GVG).

It belongs to the adenylosuccinate synthetase family. As to quaternary structure, homodimer. Mg(2+) serves as cofactor.

Its subcellular location is the cytoplasm. It catalyses the reaction IMP + L-aspartate + GTP = N(6)-(1,2-dicarboxyethyl)-AMP + GDP + phosphate + 2 H(+). Its pathway is purine metabolism; AMP biosynthesis via de novo pathway; AMP from IMP: step 1/2. Its function is as follows. Plays an important role in the salvage pathway for purine nucleotide biosynthesis. Catalyzes the first committed step in the biosynthesis of AMP from IMP. The chain is Adenylosuccinate synthetase from Babesia bovis.